Here is a 275-residue protein sequence, read N- to C-terminus: Large ribosomal subunit protein uL2 (275 aa).

The tract at residues 223–275 (VAMNPVDHPHGGGEGRTGEGRVPVSPWGTPAKGYRTRNNKRTDNMIVRRRHSK) is disordered. A compositionally biased stretch (basic and acidic residues) spans 229-241 (DHPHGGGEGRTGE).

This sequence belongs to the universal ribosomal protein uL2 family. Part of the 50S ribosomal subunit. Forms a bridge to the 30S subunit in the 70S ribosome.

Functionally, one of the primary rRNA binding proteins. Required for association of the 30S and 50S subunits to form the 70S ribosome, for tRNA binding and peptide bond formation. It has been suggested to have peptidyltransferase activity; this is somewhat controversial. Makes several contacts with the 16S rRNA in the 70S ribosome. The protein is Large ribosomal subunit protein uL2 of Laribacter hongkongensis (strain HLHK9).